A 657-amino-acid chain; its full sequence is Putative serine protease (657 aa).

3 helical membrane passes run 4–24 (YLAT…LLMP), 46–62 (WLLT…PSGT), and 109–131 (LLSG…VLML). The region spanning 239 to 434 (QPGSDFVECE…ETDRYARTME (196 aa)) is the Peptidase S39 domain. Residues His284, Asp318, and Ser386 each act as for protease activity in the active site. Residues 513–605 (PLGGLPISNG…PPSTGSVPKS (93 aa)) form a disordered region. The span at 548 to 559 (HTRRRRRNKKKS) shows a compositional bias: basic residues. Residues 560-569 (KNSETGHGPE) show a composition bias toward basic and acidic residues. Positions 571-589 (QSQQQSRPSSPIPDDSAPV) are enriched in low complexity.

It belongs to the peptidase S39B family.

It is found in the host membrane. In terms of biological role, putative serine protease. The sequence is that of Putative serine protease from Mushroom bacilliform virus (isolate Australia/AUS LF-1) (MBV).